Here is a 430-residue protein sequence, read N- to C-terminus: Histidine--tRNA ligase (430 aa).

Belongs to the class-II aminoacyl-tRNA synthetase family. Homodimer.

The protein localises to the cytoplasm. It carries out the reaction tRNA(His) + L-histidine + ATP = L-histidyl-tRNA(His) + AMP + diphosphate + H(+). The polypeptide is Histidine--tRNA ligase (Acinetobacter baumannii (strain ACICU)).